Reading from the N-terminus, the 807-residue chain is Enhancer of polycomb homolog 2 (807 aa).

Glycyl lysine isopeptide (Lys-Gly) (interchain with G-Cter in SUMO2) cross-links involve residues lysine 135, lysine 195, lysine 324, and lysine 362. A disordered region spans residues aspartate 376 to glycine 396. Serine 538 carries the phosphoserine modification. Low complexity predominate over residues glutamine 600–glutamine 613. 2 disordered regions span residues glutamine 600–serine 628 and serine 645–glycine 673. 2 stretches are compositionally biased toward polar residues: residues threonine 614–serine 628 and glutamate 657–glycine 673. At serine 754 the chain carries Phosphoserine.

It belongs to the enhancer of polycomb family.

It is found in the nucleus. May play a role in transcription or DNA repair. This is Enhancer of polycomb homolog 2 (EPC2) from Homo sapiens (Human).